Reading from the N-terminus, the 142-residue chain is Putative 2'-deoxynucleoside 5'-phosphate N-hydrolase 1 (142 aa).

Substrate is bound by residues 4 to 10, Tyr-19, His-36, Glu-82, and 106 to 108; these read FFSGSIR and SAM.

Belongs to the 2'-deoxynucleoside 5'-phosphate N-hydrolase 1 family. In terms of assembly, monomer and homodimer.

The catalysed reaction is a pyrimidine 2'-deoxyribonucleoside 5'-phosphate + H2O = a pyrimidine nucleobase + 2-deoxy-D-ribose 5-phosphate. The enzyme catalyses a purine 2'-deoxyribonucleoside 5'-phosphate + H2O = a purine nucleobase + 2-deoxy-D-ribose 5-phosphate. In terms of biological role, catalyzes the cleavage of the N-glycosidic bond of deoxyribonucleoside 5'-monophosphates to yield deoxyribose 5-phosphate and a purine or pyrimidine base. In Syntrophotalea carbinolica (strain DSM 2380 / NBRC 103641 / GraBd1) (Pelobacter carbinolicus), this protein is Putative 2'-deoxynucleoside 5'-phosphate N-hydrolase 1.